Consider the following 86-residue polypeptide: Large ribosomal subunit protein eL20 (86 aa).

Belongs to the eukaryotic ribosomal protein eL20 family. In terms of assembly, part of the 50S ribosomal subunit. Binds 23S rRNA.

The protein is Large ribosomal subunit protein eL20 of Saccharolobus islandicus (strain Y.N.15.51 / Yellowstone #2) (Sulfolobus islandicus).